A 469-amino-acid polypeptide reads, in one-letter code: tRNA (cytosine(72)-C(5))-methyltransferase NSUN6 (469 aa).

One can recognise a PUA domain in the interval 111–203 (QCEAIVGAQC…MGIRMTEPVY (93 aa)). S-adenosyl-L-methionine contacts are provided by residues 242–248 (CAAPGGK), aspartate 266, aspartate 293, and aspartate 323. The active-site Nucleophile is cysteine 373. Position 419 is an N6-acetyllysine (lysine 419).

This sequence belongs to the class I-like SAM-binding methyltransferase superfamily. RsmB/NOP family.

The protein localises to the cytoplasm. It catalyses the reaction cytidine(72) in tRNA(Thr) + S-adenosyl-L-methionine = 5-methylcytidine(72) in tRNA(Thr) + S-adenosyl-L-homocysteine + H(+). The catalysed reaction is cytidine(72) in tRNA(Cys) + S-adenosyl-L-methionine = 5-methylcytidine(72) in tRNA(Cys) + S-adenosyl-L-homocysteine + H(+). In terms of biological role, S-adenosyl-L-methionine-dependent methyltransferase that specifically methylates the C5 position of cytosine 72 in tRNA(Thr)(TGT) and tRNA(Cys)(GCA). In vitro also methylates tRNA(Thr)(AGT). Methylation requires, in the acceptor stem region, the presence of the 3'-CCA terminus, the target site C72, the discriminator base U73, and the second and third base pairs (2:71 and 3:70) in the tRNA substrates. The chain is tRNA (cytosine(72)-C(5))-methyltransferase NSUN6 from Homo sapiens (Human).